A 209-amino-acid chain; its full sequence is Small ribosomal subunit protein uS4 (209 aa).

One can recognise an S4 RNA-binding domain in the interval S98–K158.

This sequence belongs to the universal ribosomal protein uS4 family. Part of the 30S ribosomal subunit. Contacts protein S5. The interaction surface between S4 and S5 is involved in control of translational fidelity.

Functionally, one of the primary rRNA binding proteins, it binds directly to 16S rRNA where it nucleates assembly of the body of the 30S subunit. With S5 and S12 plays an important role in translational accuracy. The chain is Small ribosomal subunit protein uS4 from Pseudothermotoga lettingae (strain ATCC BAA-301 / DSM 14385 / NBRC 107922 / TMO) (Thermotoga lettingae).